The following is a 309-amino-acid chain: uncharacterized protein (309 aa).

Residues 1–11 (MPGNSRRRGAV) are compositionally biased toward basic residues. The segment at 1–69 (MPGNSRRRGA…PVKRTDETET (69 aa)) is disordered. Residues glycine 261, isoleucine 281, and leucine 290 each contribute to the S-adenosyl-L-methionine site.

This sequence belongs to the class IV-like SAM-binding methyltransferase superfamily. RNA methyltransferase TrmH family.

This is an uncharacterized protein from Mycobacterium leprae (strain TN).